A 317-amino-acid polypeptide reads, in one-letter code: Beta-ketoacyl-[acyl-carrier-protein] synthase III (317 aa).

Catalysis depends on residues Cys-112 and His-244. The tract at residues 245 to 249 is ACP-binding; the sequence is QANLR. Asn-274 is an active-site residue.

The protein belongs to the thiolase-like superfamily. FabH family. As to quaternary structure, homodimer.

The protein resides in the cytoplasm. It carries out the reaction malonyl-[ACP] + acetyl-CoA + H(+) = 3-oxobutanoyl-[ACP] + CO2 + CoA. It participates in lipid metabolism; fatty acid biosynthesis. Functionally, catalyzes the condensation reaction of fatty acid synthesis by the addition to an acyl acceptor of two carbons from malonyl-ACP. Catalyzes the first condensation reaction which initiates fatty acid synthesis and may therefore play a role in governing the total rate of fatty acid production. Possesses both acetoacetyl-ACP synthase and acetyl transacylase activities. Its substrate specificity determines the biosynthesis of branched-chain and/or straight-chain of fatty acids. The polypeptide is Beta-ketoacyl-[acyl-carrier-protein] synthase III (Shigella sonnei (strain Ss046)).